Reading from the N-terminus, the 813-residue chain is Leucine--tRNA ligase (813 aa).

The 'HIGH' region motif lies at 41-51; sequence PYPSGTLHMGH. Residues 575-579 carry the 'KMSKS' region motif; it reads KMSKS. Lysine 578 contributes to the ATP binding site.

This sequence belongs to the class-I aminoacyl-tRNA synthetase family.

The protein resides in the cytoplasm. The enzyme catalyses tRNA(Leu) + L-leucine + ATP = L-leucyl-tRNA(Leu) + AMP + diphosphate. This Francisella tularensis subsp. tularensis (strain FSC 198) protein is Leucine--tRNA ligase.